Reading from the N-terminus, the 299-residue chain is Glutamyl-Q tRNA(Asp) synthetase (299 aa).

L-glutamate contacts are provided by residues 9-13 (RFAPS) and Glu45. A 'HIGH' region motif is present at residues 12–22 (PSPTGPLHFGS). Cys101, Cys103, and Cys118 together coordinate Zn(2+). The L-glutamate site is built by Tyr170 and Arg188. The 'KMSKS' region motif lies at 226–230 (KLSKS). Lys229 lines the ATP pocket. The interval 279–299 (QLLPRQRQRDRATCAYERQRD) is disordered. The segment covering 285 to 299 (RQRDRATCAYERQRD) has biased composition (basic and acidic residues).

It belongs to the class-I aminoacyl-tRNA synthetase family. GluQ subfamily. Zn(2+) serves as cofactor.

Its function is as follows. Catalyzes the tRNA-independent activation of glutamate in presence of ATP and the subsequent transfer of glutamate onto a tRNA(Asp). Glutamate is transferred on the 2-amino-5-(4,5-dihydroxy-2-cyclopenten-1-yl) moiety of the queuosine in the wobble position of the QUC anticodon. The chain is Glutamyl-Q tRNA(Asp) synthetase from Xanthomonas oryzae pv. oryzae (strain KACC10331 / KXO85).